A 491-amino-acid polypeptide reads, in one-letter code: Sucrose transport protein SUC7 (491 aa).

The span at 1–13 shows a compositional bias: basic and acidic residues; the sequence is MSDLQANKDETTV. The interval 1 to 25 is disordered; sequence MSDLQANKDETTVDRQSSSSVDLDG. At 1-32 the chain is on the cytoplasmic side; that stretch reads MSDLQANKDETTVDRQSSSSVDLDGPSPLRKM. Ser17 carries the phosphoserine modification. The chain crosses the membrane as a helical span at residues 33–53; sequence ISVASIAAGIQFGWALQLSLL. Topologically, residues 54–67 are extracellular; that stretch reads TPYVQLLGVPHKWP. Residues 68 to 88 form a helical membrane-spanning segment; that stretch reads SFIWLCGPVSGLLVQPSVGYF. At 89-100 the chain is on the cytoplasmic side; it reads SDRCTSRFGRRR. Residues 101–121 form a helical membrane-spanning segment; it reads PFIATGALLVAVSVVLIGYAA. The Extracellular segment spans residues 122–138; sequence DFGHSMGDKIDKPVKMR. Residues 139–159 traverse the membrane as a helical segment; that stretch reads AVVIFALGFWILDVANNTLQG. Residues 160 to 180 lie on the Cytoplasmic side of the membrane; sequence PCRAFLGDLAAGDAQKTRTAN. A helical transmembrane segment spans residues 181-201; sequence AFFSFFMAVGNVLGYAAGSYT. The Extracellular portion of the chain corresponds to 202–223; the sequence is NLYKIFPFTMTKACDIYCANLK. Residues 224-244 traverse the membrane as a helical segment; that stretch reads SCFFLSITLLLVVTIIALWYV. The Cytoplasmic segment spans residues 245 to 276; sequence EDKQWSPKADSDNEKTPFFGEIFGAFKVMKRP. The chain crosses the membrane as a helical span at residues 277-297; the sequence is MWMLLIVTALNWIAWFPFLLY. The Extracellular segment spans residues 298-323; sequence DTDWMGREVYGGDSKGDDKMKKLYNQ. Residues 324 to 344 form a helical membrane-spanning segment; sequence GIHVGALGLMLNSIVLGVMSL. Topologically, residues 345–358 are cytoplasmic; sequence GIEGISRKMGGAKR. A helical transmembrane segment spans residues 359-379; that stretch reads LWGAVNIILAVCLAMTVLVTK. Topologically, residues 380-402 are extracellular; the sequence is KAEEHRRIAGPMALPTDGIRAGA. The helical transmembrane segment at 403–423 threads the bilayer; sequence LTLFALLGIPLAITFSIPFAL. At 424-443 the chain is on the cytoplasmic side; the sequence is ASIISSSSGAGQRLSLGVLN. A helical transmembrane segment spans residues 444 to 464; that stretch reads MAIVIPQMIVSFGVGPIDALF. Residues 465 to 468 lie on the Extracellular side of the membrane; sequence GDGN. A helical transmembrane segment spans residues 469–489; sequence LPGFVVGAIAAAVSSIVAFTV. Residues 490 to 491 are Cytoplasmic-facing; it reads LP.

It belongs to the glycoside-pentoside-hexuronide (GPH) cation symporter transporter (TC 2.A.2.4) family. As to expression, expressed in anthers.

The protein localises to the cell membrane. It functions in the pathway glycan biosynthesis; sucrose metabolism. Functionally, may be responsible for the transport of glucosides into the cell, with the concomitant uptake of protons (symport system). Does not seem to transport sucrose. This chain is Sucrose transport protein SUC7, found in Arabidopsis thaliana (Mouse-ear cress).